The chain runs to 87 residues: uncharacterized protein (87 aa).

This sequence belongs to the SF3B5 family.

This is an uncharacterized protein from Arabidopsis thaliana (Mouse-ear cress).